Here is a 760-residue protein sequence, read N- to C-terminus: General transcription and DNA repair factor IIH helicase subunit XPD (760 aa).

The Helicase ATP-binding domain maps to 7 to 283 (GLLVYFPYDY…KETDEQRLRD (277 aa)). Position 42 to 49 (42 to 49 (MPSGTGKT)) interacts with ATP. [4Fe-4S] cluster is bound by residues C116, C134, C155, and C190. The DEAH box signature appears at 234-237 (DEAH). The interval 438 to 637 (MDASLAIKPV…TQSRILKARL (200 aa)) is mediates interaction with MMS19.

This sequence belongs to the helicase family. RAD3/XPD subfamily. Component of the 7-subunit TFIIH core complex composed of XPB/ERCC3, XPD/ERCC2, GTF2H1, GTF2H2, GTF2H3, GTF2H4 and GTF2H5, which is active in NER. The core complex associates with the 3-subunit CDK-activating kinase (CAK) module composed of CCNH/cyclin H, CDK7 and MNAT1 to form the 10-subunit holoenzyme (holo-TFIIH) active in transcription. The interaction with GTF2H2 results in the stimulation of the 5'--&gt;3' helicase activity. Component of the MMXD complex, which includes CIAO1, ERCC2, CIAO2B, MMS19 and SLC25A5. Interacts with CIAO1 and CIAO2B; the interaction WITH CIAO2B is direct. Interacts with ATF7IP. Interacts directly with MMS19. Part of TBP-based Pol II pre-initiation complex (PIC), in which Pol II core assembles with general transcription factors and other specific initiation factors including GTF2E1, GTF2E2, GTF2F1, GTF2F2, TCEA1, ERCC2, ERCC3, GTF2H2, GTF2H3, GTF2H4, GTF2H5, GTF2A1, GTF2A2, GTF2B and TBP; this large multi-subunit PIC complex mediates DNA unwinding and targets Pol II core to the transcription start site where the first phosphodiester bond forms. Mg(2+) is required as a cofactor. Requires [4Fe-4S] cluster as cofactor. Post-translationally, ISGylated.

The protein resides in the nucleus. Its subcellular location is the cytoplasm. The protein localises to the cytoskeleton. It localises to the spindle. The catalysed reaction is Couples ATP hydrolysis with the unwinding of duplex DNA at the replication fork by translocating in the 5'-3' direction. This creates two antiparallel DNA single strands (ssDNA). The leading ssDNA polymer is the template for DNA polymerase III holoenzyme which synthesizes a continuous strand.. It carries out the reaction ATP + H2O = ADP + phosphate + H(+). ATP-dependent 5'-3' DNA helicase, component of the general transcription and DNA repair factor IIH (TFIIH) core complex, which is involved in general and transcription-coupled nucleotide excision repair (NER) of damaged DNA and, when complexed to CDK-activating kinase (CAK), involved in transcription by RNA polymerase II. In NER, TFIIH acts by opening DNA around the lesion to allow the excision of the damaged oligonucleotide and its replacement by a new DNA fragment. The ATP-dependent helicase activity of XPD/ERCC2 is required for DNA opening. In transcription, TFIIH has an essential role in transcription initiation. When the pre-initiation complex (PIC) has been established, TFIIH is required for promoter opening and promoter escape. Phosphorylation of the C-terminal tail (CTD) of the largest subunit of RNA polymerase II by the kinase module CAK controls the initiation of transcription. XPD/ERCC2 acts by forming a bridge between CAK and the core-TFIIH complex. Involved in the regulation of vitamin-D receptor activity. As part of the mitotic spindle-associated MMXD complex it plays a role in chromosome segregation. Might have a role in aging process and could play a causative role in the generation of skin cancers. The protein is General transcription and DNA repair factor IIH helicase subunit XPD (Ercc2) of Mus musculus (Mouse).